The chain runs to 258 residues: Ribosomal RNA small subunit methyltransferase A (258 aa).

Residues His13, Leu15, Gly40, Glu62, Asp87, and Asn108 each coordinate S-adenosyl-L-methionine.

The protein belongs to the class I-like SAM-binding methyltransferase superfamily. rRNA adenine N(6)-methyltransferase family. RsmA subfamily.

It localises to the cytoplasm. It carries out the reaction adenosine(1518)/adenosine(1519) in 16S rRNA + 4 S-adenosyl-L-methionine = N(6)-dimethyladenosine(1518)/N(6)-dimethyladenosine(1519) in 16S rRNA + 4 S-adenosyl-L-homocysteine + 4 H(+). Functionally, specifically dimethylates two adjacent adenosines (A1518 and A1519) in the loop of a conserved hairpin near the 3'-end of 16S rRNA in the 30S particle. May play a critical role in biogenesis of 30S subunits. The chain is Ribosomal RNA small subunit methyltransferase A from Sulfurihydrogenibium sp. (strain YO3AOP1).